The following is a 75-amino-acid chain: MFTMKKSLLFLFFLGTISLSFCEEERSADEDDEGEMTEEEKRSIRDKIKTMAIDLAKSAGTGVLKTLICKLDKSC.

An N-terminal signal peptide occupies residues 1–22 (MFTMKKSLLFLFFLGTISLSFC). Positions 23 to 40 (EEERSADEDDEGEMTEEE) are excised as a propeptide.

Expressed by the skin glands.

The protein localises to the secreted. Has antimicrobial activity against Gram-positive bacteria S.aureus ATCC 2592 (MIC=10.0 uM), S.aureus ATCC 43300 (MIC=15.0 uM) and B.subtilis (MIC=40.0 uM), against Gram-negative bacteria E.coli ML-35P (MIC=10.0 uM), P.aeruginosa PA01 (MIC=5.0 uM) and P.aeruginosa ATCC 27853 (MIC=5.0 uM) and against fungus C.albicans ATCC 2002 (MIC=10.0 uM). The protein is Rugosin-LK1 of Limnonectes kuhlii (Kuhl's Creek frog).